We begin with the raw amino-acid sequence, 155 residues long: uncharacterized protein (155 aa).

A signal peptide spans 1–21 (MFFIVAAGFVIAALIAAIGMA). The segment at 35 to 155 (GQTKPATTRP…PVYRPPEEMV (121 aa)) is disordered. Polar residues predominate over residues 118-128 (ATASNTPQNEA).

This is an uncharacterized protein from Schizosaccharomyces pombe (strain 972 / ATCC 24843) (Fission yeast).